Here is a 433-residue protein sequence, read N- to C-terminus: KICSTOR complex protein ITFG2 (433 aa).

The stretch at 19–48 is one FG-GAP 1; atypical repeat; that stretch reads FPHAICLGDVDNDTLNELVVGDTSGKVSVY. Phosphoserine is present on Ser-104. The FG-GAP 2; atypical repeat unit spans residues 126–155; that stretch reads NTKVMLISDIDGDGCRELVVGYTDRVVRAF. At Ser-220 the chain carries Phosphoserine.

In terms of assembly, part of the KICSTOR complex composed of KPTN, ITFG2, KICS2 and SZT2. SZT2 probably serves as a link between the other three proteins in the KICSTOR complex and may mediate the direct interaction with the GATOR complex via GATOR1. The KICSTOR complex interacts directly with the GATOR1 complex and most probably indirectly with the GATOR2 complex in an amino acid-independent manner.

It is found in the lysosome membrane. In terms of biological role, as part of the KICSTOR complex functions in the amino acid-sensing branch of the TORC1 signaling pathway. Recruits, in an amino acid-independent manner, the GATOR1 complex to the lysosomal membranes and allows its interaction with GATOR2 and the RAG GTPases. Functions upstream of the RAG GTPases and is required to negatively regulate mTORC1 signaling in absence of amino acids. In absence of the KICSTOR complex mTORC1 is constitutively localized to the lysosome and activated. The KICSTOR complex is also probably involved in the regulation of mTORC1 by glucose. This Pongo abelii (Sumatran orangutan) protein is KICSTOR complex protein ITFG2.